We begin with the raw amino-acid sequence, 36 residues long: Kappa-theraphotoxin-Aa1a (36 aa).

Intrachain disulfides connect cysteine 3/cysteine 18, cysteine 10/cysteine 23, and cysteine 17/cysteine 30. Isoleucine 36 carries the isoleucine amide modification.

This sequence belongs to the neurotoxin 10 (Hwtx-1) family. Expressed by the venom gland.

The protein localises to the secreted. In terms of biological role, selective inhibitor of voltage-gated potassium channel Kv10.1/KCNH1/EAG1 (IC(50)=637 nM). It acts by shifting the voltage dependence of channel activation in a depolarising direction. It shows a 100% inhibition at saturating concentrations, shows fast on-rates and is reversible. It also slightly affects channel inactivation, when the membrane is highly depolarised (&gt;+80 mV). This is Kappa-theraphotoxin-Aa1a from Avicularia aurantiaca (Yellow-banded pinktoe tarantula).